We begin with the raw amino-acid sequence, 1280 residues long: MAASSNDASKSAMANSNVTTEVAQTPSKEQDVNGEVEATEEDGANGQLPDNIFQIKIKLPHEPFEIPMTISTAEQVQDLRQSIIEMPNTFQYSCFHLEHKGQRINDFVDLSEVPELGPDSVLEVKEDPYNEKEARLHVIRVRELIGAAGDRTDALHGIMAGLSLHDTVGLDQSGKPKEDGPEQSPLADYDFKSSGAIKNLLPPPQEPAPKCIKSIALSAWNPPPYHLRTKGHLLYLVAMTNENEQHHITSHVTGFYVNKSSNASFDPAPRQGPKALHAHSLLTLLEKLSPSFEASFQQLLEHNAKKELLTIFQLSNAIPANPWLVPPPTSSLTTHQPDLARTQESYLISGVENTDTLRDWNEEFQSTREMPKEAVHDRVFRERLTSKLFADYNDAATRGAMLVARGEIAPLNPTEAKDAQIFVYNNIFYSFGADGVGTFGTEGGDEAARVAVGKDVIGVRAVNNLDIPNLFTSGTVVVDFLGKRIVGQSIVPGIFKQRDPGEHQIDYGAVEGKEIVADDKSFVPLFEQLSKALRVKKHPVWDKDNVRHELEGSVETKGLIGTDGRRYALDLYRLTPLDVAWIEAHWSEPSKDEDAKPSEKNYPHRMATLRPELVESYGRLKLREYVKNEIDKKANKARGGRRRLPKAQKKADAGKEVDGEKKAEAEPEQDRVDISGFSFALNPDVFSGQTPQSDEDKAEWAKDEAEVRAACDHLQTEVIPRMITELKDGEVGFPMDGQSLSSLLHKRGVNIRYLGKIAELSDKPDPRLQALKRLIVQEMIARGFKHFANSKLRNVSAPFSAACVAHLLNCLLGADANAKPVAECDEEIKRMISTPEDDFSFEKLTPESLKKEVIAQIALRYRYDLGESWVESGKELQLLREVSLKLGLQLQTRQYGFTKETLTNGAAVPTPAAPQTNGSSTSSKKKKNKTITPPRADSPAVSLPSQTFHADDILNIVPVIKEASPKSLLAEEALEAGRMSVAQDQKELGQELLLESLQLHEQIYGVLHPEVARAYHTLSNLLFNLDDKASALELAHKAVIVSERTLGVDHADTVLAYLNLGLFEHASGNTKAALVYVRHALELWKIIYGADHPDSITTLNNAAVMLQAMKQYHESRIWFEASLAICEDVSGKTSINTATLLFQTAQALALDKDMRGAVNRMRESYNIFKDVLGAEDRNTKEAESWLEQLTQSAVSQAKQLNDLAKGRIRRIQLTGRNPLRPAAATPSVSDAAAAAGGQRTGTGRVDQRKIEDLLKYIEGESSKTPTKKRTQNPRKRTQKP.

The span at 1–27 (MAASSNDASKSAMANSNVTTEVAQTPS) shows a compositional bias: polar residues. Disordered stretches follow at residues 1 to 49 (MAAS…GQLP) and 169 to 189 (GLDQSGKPKEDGPEQSPLADY). The span at 32–43 (VNGEVEATEEDG) shows a compositional bias: acidic residues. Residues 338–582 (DLARTQESYL…RLTPLDVAWI (245 aa)) form the Clu domain. Disordered stretches follow at residues 633-669 (KANKARGGRRRLPKAQKKADAGKEVDGEKKAEAEPEQ), 905-943 (GAAVPTPAAPQTNGSSTSSKKKKNKTITPPRADSPAVSL), and 1214-1280 (TGRN…TQKP). Positions 635-648 (NKARGGRRRLPKAQ) are enriched in basic residues. Positions 649 to 669 (KKADAGKEVDGEKKAEAEPEQ) are enriched in basic and acidic residues. A compositionally biased stretch (low complexity) spans 1221 to 1235 (PAAATPSVSDAAAAA). Over residues 1245 to 1261 (VDQRKIEDLLKYIEGES) the composition is skewed to basic and acidic residues. Basic residues predominate over residues 1265–1280 (PTKKRTQNPRKRTQKP).

Belongs to the CLU family. As to quaternary structure, may associate with the eukaryotic translation initiation factor 3 (eIF-3) complex.

The protein resides in the cytoplasm. MRNA-binding protein involved in proper cytoplasmic distribution of mitochondria. In Phaeosphaeria nodorum (strain SN15 / ATCC MYA-4574 / FGSC 10173) (Glume blotch fungus), this protein is Clustered mitochondria protein homolog.